We begin with the raw amino-acid sequence, 414 residues long: 3-aminobutyryl-CoA aminotransferase (414 aa).

N6-(pyridoxal phosphate)lysine is present on Lys261.

This sequence belongs to the class-III pyridoxal-phosphate-dependent aminotransferase family. In terms of assembly, homodimer. Pyridoxal 5'-phosphate serves as cofactor.

The enzyme catalyses (3S)-3-aminobutanoyl-CoA + 2-oxoglutarate = acetoacetyl-CoA + L-glutamate. It participates in amino-acid degradation; L-lysine degradation via acetate pathway. Functionally, 3-aminobutyryl-CoA aminotransferase that acts specifically on coenzyme A (CoA) esters and catalyzes the conversion of 3-aminobutyryl-CoA into acetoacetyl-CoA in an alternative pathway of lysine fermentation. In Cloacimonas acidaminovorans (strain Evry), this protein is 3-aminobutyryl-CoA aminotransferase (kat).